A 164-amino-acid chain; its full sequence is Protein-export protein SecB (164 aa).

It belongs to the SecB family. As to quaternary structure, homotetramer, a dimer of dimers. One homotetramer interacts with 1 SecA dimer.

It is found in the cytoplasm. In terms of biological role, one of the proteins required for the normal export of preproteins out of the cell cytoplasm. It is a molecular chaperone that binds to a subset of precursor proteins, maintaining them in a translocation-competent state. It also specifically binds to its receptor SecA. This is Protein-export protein SecB from Zymomonas mobilis subsp. mobilis (strain ATCC 31821 / ZM4 / CP4).